Reading from the N-terminus, the 234-residue chain is Thiamine-phosphate synthase (234 aa).

Residues 65–69 (QYRNK) and asparagine 97 contribute to the 4-amino-2-methyl-5-(diphosphooxymethyl)pyrimidine site. Residues aspartate 98 and aspartate 117 each contribute to the Mg(2+) site. Residue serine 136 participates in 4-amino-2-methyl-5-(diphosphooxymethyl)pyrimidine binding. 163 to 165 (SHT) is a 2-[(2R,5Z)-2-carboxy-4-methylthiazol-5(2H)-ylidene]ethyl phosphate binding site. Lysine 166 contacts 4-amino-2-methyl-5-(diphosphooxymethyl)pyrimidine. Residues glycine 192 and 212-213 (IS) each bind 2-[(2R,5Z)-2-carboxy-4-methylthiazol-5(2H)-ylidene]ethyl phosphate.

Belongs to the thiamine-phosphate synthase family. Mg(2+) serves as cofactor.

The catalysed reaction is 2-[(2R,5Z)-2-carboxy-4-methylthiazol-5(2H)-ylidene]ethyl phosphate + 4-amino-2-methyl-5-(diphosphooxymethyl)pyrimidine + 2 H(+) = thiamine phosphate + CO2 + diphosphate. The enzyme catalyses 2-(2-carboxy-4-methylthiazol-5-yl)ethyl phosphate + 4-amino-2-methyl-5-(diphosphooxymethyl)pyrimidine + 2 H(+) = thiamine phosphate + CO2 + diphosphate. It catalyses the reaction 4-methyl-5-(2-phosphooxyethyl)-thiazole + 4-amino-2-methyl-5-(diphosphooxymethyl)pyrimidine + H(+) = thiamine phosphate + diphosphate. It functions in the pathway cofactor biosynthesis; thiamine diphosphate biosynthesis; thiamine phosphate from 4-amino-2-methyl-5-diphosphomethylpyrimidine and 4-methyl-5-(2-phosphoethyl)-thiazole: step 1/1. Condenses 4-methyl-5-(beta-hydroxyethyl)thiazole monophosphate (THZ-P) and 2-methyl-4-amino-5-hydroxymethyl pyrimidine pyrophosphate (HMP-PP) to form thiamine monophosphate (TMP). The polypeptide is Thiamine-phosphate synthase (Xylella fastidiosa (strain Temecula1 / ATCC 700964)).